Reading from the N-terminus, the 188-residue chain is Elongation factor P (188 aa).

Belongs to the elongation factor P family.

It localises to the cytoplasm. The protein operates within protein biosynthesis; polypeptide chain elongation. Functionally, involved in peptide bond synthesis. Stimulates efficient translation and peptide-bond synthesis on native or reconstituted 70S ribosomes in vitro. Probably functions indirectly by altering the affinity of the ribosome for aminoacyl-tRNA, thus increasing their reactivity as acceptors for peptidyl transferase. The protein is Elongation factor P of Bdellovibrio bacteriovorus (strain ATCC 15356 / DSM 50701 / NCIMB 9529 / HD100).